Reading from the N-terminus, the 145-residue chain is Probable WRKY transcription factor 75 (145 aa).

The span at 20–38 (SKPELHQGEEESSKVRSEG) shows a compositional bias: basic and acidic residues. Residues 20 to 55 (SKPELHQGEEESSKVRSEGCSKSVESSKKKGKKQRY) are disordered. The WRKY DNA-binding region spans 61–126 (SQVDILDDGY…YEGVHSHPIE (66 aa)).

The protein belongs to the WRKY group II-c family.

The protein localises to the nucleus. Functionally, transcription factor. Interacts specifically with the W box (5'-(T)TGAC[CT]-3'), a frequently occurring elicitor-responsive cis-acting element. The protein is Probable WRKY transcription factor 75 (WRKY75) of Arabidopsis thaliana (Mouse-ear cress).